The sequence spans 364 residues: UDP-3-O-acylglucosamine N-acyltransferase (364 aa).

His258 (proton acceptor) is an active-site residue.

This sequence belongs to the transferase hexapeptide repeat family. LpxD subfamily. Homotrimer.

The catalysed reaction is a UDP-3-O-[(3R)-3-hydroxyacyl]-alpha-D-glucosamine + a (3R)-hydroxyacyl-[ACP] = a UDP-2-N,3-O-bis[(3R)-3-hydroxyacyl]-alpha-D-glucosamine + holo-[ACP] + H(+). It participates in bacterial outer membrane biogenesis; LPS lipid A biosynthesis. Catalyzes the N-acylation of UDP-3-O-acylglucosamine using 3-hydroxyacyl-ACP as the acyl donor. Is involved in the biosynthesis of lipid A, a phosphorylated glycolipid that anchors the lipopolysaccharide to the outer membrane of the cell. The polypeptide is UDP-3-O-acylglucosamine N-acyltransferase (Burkholderia orbicola (strain AU 1054)).